The sequence spans 107 residues: uncharacterized protein (107 aa).

Over residues 80–98 (SIDNLKPTSHQNGTTNDTA) the composition is skewed to polar residues. A disordered region spans residues 80–107 (SIDNLKPTSHQNGTTNDTATMDHLEKNE).

This is an uncharacterized protein from Human spumaretrovirus (SFVcpz(hu)).